The chain runs to 463 residues: uncharacterized protein (463 aa).

It belongs to the UbiD family.

This is an uncharacterized protein from Rhodospirillum rubrum.